A 514-amino-acid chain; its full sequence is Putative transposase y4uI (514 aa).

The HTH IS408-type domain occupies 11–93 (VREILKLRLD…PDWSAVAREL (83 aa)). The region spanning 128–317 (HGRLPLVMRQ…TRRALFDELD (190 aa)) is the Integrase catalytic domain.

This sequence belongs to the transposase IS21/IS408/IS1162 family.

This chain is Putative transposase y4uI, found in Sinorhizobium fredii (strain NBRC 101917 / NGR234).